A 966-amino-acid chain; its full sequence is Mitogen-activated protein kinase kinase kinase 13 (966 aa).

The interval 1-59 (MANPQEHLSCSSSPRLPLSENKTFNGLQDDLAPMGSHASPKLLKDQQEKGMVQTELAEG) is disordered. The span at 8–19 (LSCSSSPRLPLS) shows a compositional bias: low complexity. The region spanning 168–409 (ISELQWLGSG…FRQTLMHLDI (242 aa)) is the Protein kinase domain. ATP-binding positions include 174–182 (LGSGAQGAV) and lysine 195. The active-site Proton acceptor is aspartate 279. 2 leucine-zipper regions span residues 433–454 (VKKH…DEEL) and 486–507 (LSAI…EQAV). Residues 457-496 (RRREELRHALDIREHYERKLERANNLYMELSAIMLQLEMR) are a coiled coil. Disordered regions lie at residues 561–663 (EVAP…GQDI), 743–874 (LDVP…DELA), and 937–966 (QFEE…SATW). The segment covering 567–581 (SPLSGSPKLSSSSSK) has biased composition (low complexity). The span at 582–594 (SRYRSKPRHRRGN) shows a compositional bias: basic residues. Residues 609–622 (QPAQEDSPHPTSLH) are compositionally biased toward polar residues. Over residues 629–642 (PSSQHHNLLQQQYQ) the composition is skewed to low complexity. A compositionally biased stretch (acidic residues) spans 814–827 (DSSEEEEGEVDSEV). The tract at residues 815–828 (SSEEEEGEVDSEVE) is acidic. Residues 840 to 855 (SSCQSYSTFSSENFSV) are compositionally biased toward polar residues. Acidic residues predominate over residues 939–950 (EESDCDSSDGEC). The segment covering 954-966 (TVRTNKHYSSATW) has biased composition (polar residues).

This sequence belongs to the protein kinase superfamily. Ser/Thr protein kinase family. In terms of assembly, homodimer; forms dimers through the leucine-zipper motif. Interacts with the C-terminus of MAPK8IP1 through the kinase catalytic domain. Binds PRDX3. Associates with the IKK complex through the kinase domain. It depends on Mg(2+) as a cofactor. In terms of processing, autophosphorylated on serine and threonine residues.

Its subcellular location is the cytoplasm. It localises to the membrane. The enzyme catalyses L-seryl-[protein] + ATP = O-phospho-L-seryl-[protein] + ADP + H(+). It carries out the reaction L-threonyl-[protein] + ATP = O-phospho-L-threonyl-[protein] + ADP + H(+). With respect to regulation, activated by autophosphorylation and homodimerization. In terms of biological role, activates the JUN N-terminal pathway through activation of the MAP kinase kinase MAP2K7. Acts synergistically with PRDX3 to regulate the activation of NF-kappa-B in the cytosol. This activation is kinase-dependent and involves activating the IKK complex, the IKBKB-containing complex that phosphorylates inhibitors of NF-kappa-B. This chain is Mitogen-activated protein kinase kinase kinase 13 (MAP3K13), found in Bos taurus (Bovine).